The following is a 218-amino-acid chain: MEGKGKEIVVGHSISKSSVECHKYYLARRTTMEMLRDRGYDVSDEDINLSLQQFRALYGEHPDVDLLRISAKHRFDSSKKISVVFCGTGIVKVNAMRVIAADVLSRENITGLILVLQSHITNQALKAVELFSFKVELFEITDLLVNVSKHVLRPKHQVLNDKEKESLLKKFSIEEKQLPRLSSKDPIVRYYGLETGQVMKVTYKDELSESHVTYRCVS.

Belongs to the archaeal Rpo5/eukaryotic RPB5 RNA polymerase subunit family. As to quaternary structure, component of the RNA polymerase IV and V complexes. Interacts with NRPD1. As to expression, expressed inleaves, flower buds, flowers and siliques.

It localises to the nucleus. Functionally, DNA-dependent RNA polymerase catalyzes the transcription of DNA into RNA using the four ribonucleoside triphosphates as substrates. Component of RNA polymerases IV and V which mediate short-interfering RNAs (siRNA) accumulation and subsequent RNA-directed DNA methylation-dependent (RdDM) transcriptional gene silencing (TGS) of endogenous repeated sequences, including transposable elements. The sequence is that of DNA-directed RNA polymerases IV and V subunit 5B (NRPD5B) from Arabidopsis thaliana (Mouse-ear cress).